We begin with the raw amino-acid sequence, 344 residues long: Transcription factor AIG1 (344 aa).

Residues 131–180 (AASKSHSEAERRRRERINTHLAKLRSILPNTTKTDKASLLAEVIQHMKEL) form the bHLH domain. The tract at residues 313–344 (NDESNDNNNLEKSSSGGIKRQRTSKMVNRCYN) is disordered. Positions 318 to 327 (DNNNLEKSSS) are enriched in low complexity.

As to quaternary structure, homodimer. Interacts with LHW.

It localises to the nucleus. Functionally, transcription factor required for MONOPTEROS-dependent root initiation in embryo. Transcriptionally controlled by MONOPTEROS. The sequence is that of Transcription factor AIG1 (BHLH32) from Arabidopsis thaliana (Mouse-ear cress).